Here is a 557-residue protein sequence, read N- to C-terminus: Small ribosomal subunit protein bS1 (557 aa).

4 S1 motif domains span residues 21 to 87, 105 to 171, 192 to 260, and 277 to 347; these read GSIV…LSRE, AETV…VSRR, GMEV…LGLK, and GTKL…LGLK. N6-acetyllysine is present on residues Lys229, Lys279, and Lys363. S1 motif domains follow at residues 364–434 and 451–520; these read GDRV…LGVK and GAIV…LSVR.

Belongs to the bacterial ribosomal protein bS1 family. As to quaternary structure, part of the 30S ribosomal subunit. Some nascent polypeptide chains are able to cross-link to this protein in situ. Can be cross-linked to mRNA in the ribosome. Post-translationally, phosphorylated; probably on a serine.

Functionally, required for translation of most natural mRNAs except for leaderless mRNA. Binds mRNA upstream of the Shine-Dalgarno (SD) sequence and helps it bind to the 30S ribosomal subunit; acts as an RNA chaperone to unfold structured mRNA on the ribosome but is not essential for mRNAs with strong SDs and little 5'-UTR structure, thus it may help fine-tune which mRNAs that are translated. Unwinds dsRNA by binding to transiently formed ssRNA regions; binds about 10 nucleotides. Has a preference for polypyrimidine tracts. Negatively autoregulates its own translation. The chain is Small ribosomal subunit protein bS1 (rpsA) from Escherichia coli O157:H7.